We begin with the raw amino-acid sequence, 173 residues long: MRGEVRLQSFTEVPQAISAYGPLSDASGKKSFSIASLRLVKNAVFVARIEGVTTREAAEALTNLSLYVSREALPPPEEEEFYLADLIGLDAFVADADGKEVLFGRIADVLNFGGGDILEIAPSDGGETRLLPFTRQVVPRIDLTARRVLVVPPEEVEAQEPPEKDAGGDEPSP.

The region spanning 78–157 is the PRC barrel domain; sequence EEEFYLADLI…VLVVPPEEVE (80 aa). A disordered region spans residues 152-173; that stretch reads PPEEVEAQEPPEKDAGGDEPSP.

It belongs to the RimM family. As to quaternary structure, binds ribosomal protein uS19.

Its subcellular location is the cytoplasm. In terms of biological role, an accessory protein needed during the final step in the assembly of 30S ribosomal subunit, possibly for assembly of the head region. Essential for efficient processing of 16S rRNA. May be needed both before and after RbfA during the maturation of 16S rRNA. It has affinity for free ribosomal 30S subunits but not for 70S ribosomes. The protein is Ribosome maturation factor RimM of Beijerinckia indica subsp. indica (strain ATCC 9039 / DSM 1715 / NCIMB 8712).